The chain runs to 445 residues: Bifunctional protein GlmU (445 aa).

Positions 1–218 are pyrophosphorylase; it reads MRALVLAAGK…LLEITGVNTR (218 aa). Residues 6–9, Lys-20, Gln-69, 74–75, 96–98, Gly-134, Glu-147, Asn-162, and Asn-216 contribute to the UDP-N-acetyl-alpha-D-glucosamine site; these read LAAG, GT, and YGD. Residue Asp-98 participates in Mg(2+) binding. Asn-216 serves as a coordination point for Mg(2+). The segment at 219 to 239 is linker; the sequence is KTLVWLEEQLRMRKIEELLEN. The interval 240–445 is N-acetyltransferase; the sequence is GVTILDPATT…GWVLKKRKEE (206 aa). Arg-321 and Lys-339 together coordinate UDP-N-acetyl-alpha-D-glucosamine. The active-site Proton acceptor is the His-351. UDP-N-acetyl-alpha-D-glucosamine-binding residues include Tyr-354 and Asn-365. Acetyl-CoA-binding positions include Ala-368, 374 to 375, Ser-393, Ala-411, and Arg-428; that span reads NY.

In the N-terminal section; belongs to the N-acetylglucosamine-1-phosphate uridyltransferase family. The protein in the C-terminal section; belongs to the transferase hexapeptide repeat family. Homotrimer. It depends on Mg(2+) as a cofactor.

It localises to the cytoplasm. It carries out the reaction alpha-D-glucosamine 1-phosphate + acetyl-CoA = N-acetyl-alpha-D-glucosamine 1-phosphate + CoA + H(+). The enzyme catalyses N-acetyl-alpha-D-glucosamine 1-phosphate + UTP + H(+) = UDP-N-acetyl-alpha-D-glucosamine + diphosphate. It participates in nucleotide-sugar biosynthesis; UDP-N-acetyl-alpha-D-glucosamine biosynthesis; N-acetyl-alpha-D-glucosamine 1-phosphate from alpha-D-glucosamine 6-phosphate (route II): step 2/2. The protein operates within nucleotide-sugar biosynthesis; UDP-N-acetyl-alpha-D-glucosamine biosynthesis; UDP-N-acetyl-alpha-D-glucosamine from N-acetyl-alpha-D-glucosamine 1-phosphate: step 1/1. It functions in the pathway bacterial outer membrane biogenesis; LPS lipid A biosynthesis. Its function is as follows. Catalyzes the last two sequential reactions in the de novo biosynthetic pathway for UDP-N-acetylglucosamine (UDP-GlcNAc). The C-terminal domain catalyzes the transfer of acetyl group from acetyl coenzyme A to glucosamine-1-phosphate (GlcN-1-P) to produce N-acetylglucosamine-1-phosphate (GlcNAc-1-P), which is converted into UDP-GlcNAc by the transfer of uridine 5-monophosphate (from uridine 5-triphosphate), a reaction catalyzed by the N-terminal domain. This chain is Bifunctional protein GlmU, found in Thermotoga petrophila (strain ATCC BAA-488 / DSM 13995 / JCM 10881 / RKU-1).